Reading from the N-terminus, the 508-residue chain is Photosystem II CP47 reaction center protein (508 aa).

Transmembrane regions (helical) follow at residues 21–36 (SVHIMHTALVSGWAGS), 101–115 (IVFSGLCFLAAIWHW), 140–156 (GIHLFLAGVACFGFGAF), 203–218 (IAAGTLGILAGLFHLS), 237–252 (VLSSSIAAVFFAAFVV), and 457–472 (TFALLFFFGHIWHGAR).

The protein belongs to the PsbB/PsbC family. PsbB subfamily. PSII is composed of 1 copy each of membrane proteins PsbA, PsbB, PsbC, PsbD, PsbE, PsbF, PsbH, PsbI, PsbJ, PsbK, PsbL, PsbM, PsbT, PsbX, PsbY, PsbZ, Psb30/Ycf12, at least 3 peripheral proteins of the oxygen-evolving complex and a large number of cofactors. It forms dimeric complexes. The cofactor is Binds multiple chlorophylls. PSII binds additional chlorophylls, carotenoids and specific lipids..

It is found in the plastid. Its subcellular location is the chloroplast thylakoid membrane. Functionally, one of the components of the core complex of photosystem II (PSII). It binds chlorophyll and helps catalyze the primary light-induced photochemical processes of PSII. PSII is a light-driven water:plastoquinone oxidoreductase, using light energy to abstract electrons from H(2)O, generating O(2) and a proton gradient subsequently used for ATP formation. The protein is Photosystem II CP47 reaction center protein of Zea mays (Maize).